A 257-amino-acid polypeptide reads, in one-letter code: Phosphate import ATP-binding protein PstB (257 aa).

The ABC transporter domain maps to 11 to 252 (IQVRNLNFYY…PAKKQTEDYI (242 aa)). ATP is bound at residue 43–50 (GPSGCGKS).

This sequence belongs to the ABC transporter superfamily. Phosphate importer (TC 3.A.1.7) family. In terms of assembly, the complex is composed of two ATP-binding proteins (PstB), two transmembrane proteins (PstC and PstA) and a solute-binding protein (PstS).

The protein localises to the cell inner membrane. It catalyses the reaction phosphate(out) + ATP + H2O = ADP + 2 phosphate(in) + H(+). Its function is as follows. Part of the ABC transporter complex PstSACB involved in phosphate import. Responsible for energy coupling to the transport system. The protein is Phosphate import ATP-binding protein PstB of Escherichia coli O6:K15:H31 (strain 536 / UPEC).